The chain runs to 306 residues: Pantothenate kinase (306 aa).

91–98 (GSVAVGKS) is an ATP binding site.

Belongs to the prokaryotic pantothenate kinase family.

The protein resides in the cytoplasm. It catalyses the reaction (R)-pantothenate + ATP = (R)-4'-phosphopantothenate + ADP + H(+). It participates in cofactor biosynthesis; coenzyme A biosynthesis; CoA from (R)-pantothenate: step 1/5. The sequence is that of Pantothenate kinase from Streptococcus thermophilus (strain CNRZ 1066).